The following is a 515-amino-acid chain: Bifunctional purine biosynthesis protein PurH (515 aa).

One can recognise an MGS-like domain in the interval 1–145 (MTKRALISVS…KNHASVTVVV (145 aa)).

This sequence belongs to the PurH family.

It catalyses the reaction (6R)-10-formyltetrahydrofolate + 5-amino-1-(5-phospho-beta-D-ribosyl)imidazole-4-carboxamide = 5-formamido-1-(5-phospho-D-ribosyl)imidazole-4-carboxamide + (6S)-5,6,7,8-tetrahydrofolate. The enzyme catalyses IMP + H2O = 5-formamido-1-(5-phospho-D-ribosyl)imidazole-4-carboxamide. Its pathway is purine metabolism; IMP biosynthesis via de novo pathway; 5-formamido-1-(5-phospho-D-ribosyl)imidazole-4-carboxamide from 5-amino-1-(5-phospho-D-ribosyl)imidazole-4-carboxamide (10-formyl THF route): step 1/1. It functions in the pathway purine metabolism; IMP biosynthesis via de novo pathway; IMP from 5-formamido-1-(5-phospho-D-ribosyl)imidazole-4-carboxamide: step 1/1. This Streptococcus pyogenes serotype M18 (strain MGAS8232) protein is Bifunctional purine biosynthesis protein PurH.